We begin with the raw amino-acid sequence, 635 residues long: Probable monoacyl phosphatidylinositol tetramannoside-binding protein LpqW (635 aa).

The signal sequence occupies residues 1–26 (MGVPSPVRRVCVTVGALVALACMVLA). 3 disordered regions span residues 32–52 (PPPAPQSTDTPRSTPPPPRRP), 389–412 (NTSVSPAPSVPDSTTTSVSTGPPE), and 511–551 (NAPT…LVKA). 2 stretches are compositionally biased toward low complexity: residues 390 to 411 (TSVSPAPSVPDSTTTSVSTGPP) and 511 to 531 (NAPTTAPSAPIGPTPSAAPDT).

This sequence belongs to the bacterial solute-binding protein 5 family.

It participates in phospholipid metabolism; phosphatidylinositol metabolism. Its function is as follows. May directly or indirectly regulate the accessibility of the key branch point intermediate, monoacyl phosphatidylinositol tetramannoside (AcPIM4), to the elongating alpha-1,6 mannosyltransferases which could regulate the lipoarabinomannans (LAMs) biosynthesis. The chain is Probable monoacyl phosphatidylinositol tetramannoside-binding protein LpqW (lpqW) from Mycobacterium tuberculosis (strain CDC 1551 / Oshkosh).